A 333-amino-acid chain; its full sequence is Ornithine carbamoyltransferase (333 aa).

Carbamoyl phosphate is bound by residues 56 to 59 (STRT), Gln-83, Arg-107, and 134 to 137 (HPTQ). L-ornithine is bound by residues Asn-167, Asp-231, and 235–236 (SM). Residues 273–274 (CL) and Arg-318 each bind carbamoyl phosphate.

It belongs to the aspartate/ornithine carbamoyltransferase superfamily. OTCase family.

The protein localises to the cytoplasm. The enzyme catalyses carbamoyl phosphate + L-ornithine = L-citrulline + phosphate + H(+). It participates in amino-acid biosynthesis; L-arginine biosynthesis; L-arginine from L-ornithine and carbamoyl phosphate: step 1/3. In terms of biological role, reversibly catalyzes the transfer of the carbamoyl group from carbamoyl phosphate (CP) to the N(epsilon) atom of ornithine (ORN) to produce L-citrulline. In Staphylococcus aureus (strain COL), this protein is Ornithine carbamoyltransferase (argF).